Reading from the N-terminus, the 235-residue chain is Dual specificity protein phosphatase 15 (235 aa).

G2 is lipidated: N-myristoyl glycine. A Tyrosine-protein phosphatase domain is found at 4-144 (GMTKVLPGLY…LEEFGWANSQ (141 aa)). Residue C88 is the Phosphocysteine intermediate of the active site. The span at 183–193 (AASATTASSAA) shows a compositional bias: low complexity. A disordered region spans residues 183-212 (AASATTASSAAEGTLQRLVPRSPRDSHQPL).

It belongs to the protein-tyrosine phosphatase family. Non-receptor class dual specificity subfamily. In terms of tissue distribution, isoform 1 is expressed in testis; predominantly in developing spermatocytes (at protein level). Isoform 2 is highly expressed in testis. Expressed in spinal cord and specifically in oligodendroglial cells. Expressed in embryonic brain cortex; down-regulated in mice with experimental autoimmune encephalomyelitis (EAE).

The protein localises to the cell membrane. The enzyme catalyses O-phospho-L-tyrosyl-[protein] + H2O = L-tyrosyl-[protein] + phosphate. It carries out the reaction O-phospho-L-seryl-[protein] + H2O = L-seryl-[protein] + phosphate. It catalyses the reaction O-phospho-L-threonyl-[protein] + H2O = L-threonyl-[protein] + phosphate. May dephosphorylate MAPK13, ATF2, ERBB3, PDGFRB and SNX6. In terms of biological role, may play a role in the regulation of oligodendrocyte differentiation. May play a role in the regulation of myelin formation. Involved in the regulation of Erk1/2 phosphorylation in Schwann cells; the signaling may be linked to the regulation of myelination. The chain is Dual specificity protein phosphatase 15 from Mus musculus (Mouse).